The following is a 131-amino-acid chain: Torsin-1A-interacting protein 2, isoform IFRG15 (131 aa).

The protein is Torsin-1A-interacting protein 2, isoform IFRG15 (Tor1aip2) of Mus musculus (Mouse).